Consider the following 318-residue polypeptide: Replication factor C small subunit (318 aa).

An ATP-binding site is contributed by 43 to 50 (GPAGTGKT).

Belongs to the activator 1 small subunits family. RfcS subfamily. Heteromultimer composed of small subunits (RfcS) and large subunits (RfcL).

Functionally, part of the RFC clamp loader complex which loads the PCNA sliding clamp onto DNA. The protein is Replication factor C small subunit of Picrophilus torridus (strain ATCC 700027 / DSM 9790 / JCM 10055 / NBRC 100828 / KAW 2/3).